The chain runs to 374 residues: LRR repeats and ubiquitin-like domain-containing protein At2g30105 (374 aa).

In terms of domain architecture, Ubiquitin-like spans 13 to 87 (IKLTVKFGGK…LMLMASQGLH (75 aa)). 9 LRR repeats span residues 128 to 151 (WKATGVIALAQANLKEIPEEVWDC), 152 to 175 (GSGVRVLDISENFIKEVPAKISSF), 177 to 200 (SMQKLFLQGNGLSDESIQWEGIAS), 201 to 224 (LKRLMLLSISHNNLTVLPSAMGSL), 225 to 248 (TSLRQLDVTNNKLTSLPNELGLLT), 250 to 270 (LEILKANNNRITSLPESIGNC), 272 to 293 (FLMEVDLSANIISELPETFTKL), 294 to 316 (RNLKTLELNNTGLKTLPSALFKM), and 318 to 340 (LQLSTLGLHNTEITVEFLRQFEG).

The chain is LRR repeats and ubiquitin-like domain-containing protein At2g30105 from Arabidopsis thaliana (Mouse-ear cress).